Consider the following 345-residue polypeptide: Ananain (345 aa).

Positions 1-24 (MTSKVQLVFLFLFLCVMWASPSAA) are cleaved as a signal peptide. A propeptide spans 25-122 (SCDEPSDPMM…VSFDDVDISS (98 aa)) (activation peptide). Intrachain disulfides connect Cys144/Cys184, Cys178/Cys217, and Cys273/Cys325. The active site involves Cys147. Cys147 contributes to the E64 binding site. Residues His279 and Asn300 contribute to the active site.

In terms of tissue distribution, stem (at protein level).

It catalyses the reaction Hydrolysis of proteins with broad specificity for peptide bonds. Best reported small molecule substrate Bz-Phe-Val-Arg-|-NHMec, but broader specificity than fruit bromelain.. Its activity is regulated as follows. Strongly inhibited by chicken egg-white cystatin. Inhibited by iodoacetamide and the active-site-directed inhibitor E64 (L-trans-epoxysuccinyl-leucylamide-(4-guanido)-butane). Cysteine protease. Displays a high level of diversity in substrate specificity at the P1-P1' cleavage site. A hydrophilic P1 residue is preferred, with Gln or Arg strongly preferred. Favors an Ile/Leu residue at the P2 position of substrates, with an overall higher preference for Leu. The optimal tripeptide for cleavage is Pro-Leu-Gln, with cleavage occurring after the Gln residue. Another optimal tripeptide is Val-Leu-Arg, which may imply that a hydrophobic residue at the P3 position of substrates is preferred. In Ananas comosus (Pineapple), this protein is Ananain.